We begin with the raw amino-acid sequence, 479 residues long: Adenosylhomocysteinase (479 aa).

The substrate site is built by T56, D133, and E199. NAD(+) is bound at residue 200-202 (TTT). Substrate-binding residues include K229 and D233. NAD(+) contacts are provided by residues N234, 263–268 (GYGDVG), E286, N321, 342–344 (IGH), and N390.

Belongs to the adenosylhomocysteinase family. As to quaternary structure, homotetramer. Requires NAD(+) as cofactor.

It carries out the reaction S-adenosyl-L-homocysteine + H2O = L-homocysteine + adenosine. It functions in the pathway amino-acid biosynthesis; L-homocysteine biosynthesis; L-homocysteine from S-adenosyl-L-homocysteine: step 1/1. Its function is as follows. Adenosylhomocysteine is a competitive inhibitor of S-adenosyl-L-methionine-dependent methyl transferase reactions; therefore adenosylhomocysteinase may play a key role in the control of methylations via regulation of the intracellular concentration of adenosylhomocysteine. The chain is Adenosylhomocysteinase from Plasmodium chabaudi chabaudi.